A 403-amino-acid chain; its full sequence is Argininosuccinate synthase (403 aa).

Residue 9-17 coordinates ATP; the sequence is AYSGGLDTS. An L-citrulline-binding site is contributed by tyrosine 86. Glycine 116 is an ATP binding site. 3 residues coordinate L-aspartate: threonine 118, asparagine 122, and aspartate 123. Asparagine 122 is an L-citrulline binding site. Residues arginine 126, serine 174, glutamate 259, and tyrosine 271 each coordinate L-citrulline.

It belongs to the argininosuccinate synthase family. Type 1 subfamily. Homotetramer.

It localises to the cytoplasm. The catalysed reaction is L-citrulline + L-aspartate + ATP = 2-(N(omega)-L-arginino)succinate + AMP + diphosphate + H(+). The protein operates within amino-acid biosynthesis; L-arginine biosynthesis; L-arginine from L-ornithine and carbamoyl phosphate: step 2/3. This Ligilactobacillus salivarius (strain UCC118) (Lactobacillus salivarius) protein is Argininosuccinate synthase.